The sequence spans 504 residues: Xylose import ATP-binding protein XylG (504 aa).

ABC transporter domains follow at residues 6–243 (LEMK…VGRE) and 260–504 (LKVD…TGGK). Position 38–45 (38–45 (GENGAGKS)) interacts with ATP.

The protein belongs to the ABC transporter superfamily. Xylose importer (TC 3.A.1.2.4) family. In terms of assembly, the complex is composed of two ATP-binding proteins (XylG), two transmembrane proteins (XylH) and a solute-binding protein (XylF).

The protein localises to the cell membrane. The enzyme catalyses D-xylose(out) + ATP + H2O = D-xylose(in) + ADP + phosphate + H(+). Functionally, part of the ABC transporter complex XylFGH involved in xylose import. Responsible for energy coupling to the transport system. In Geobacillus kaustophilus (strain HTA426), this protein is Xylose import ATP-binding protein XylG.